The primary structure comprises 239 residues: Ribose-5-phosphate isomerase A (239 aa).

Residues 40-43 (SGST), 96-99 (DGAD), and 110-113 (KGGG) each bind substrate. Catalysis depends on Glu119, which acts as the Proton acceptor. Lys137 lines the substrate pocket.

Belongs to the ribose 5-phosphate isomerase family. Homodimer.

It catalyses the reaction aldehydo-D-ribose 5-phosphate = D-ribulose 5-phosphate. It participates in carbohydrate degradation; pentose phosphate pathway; D-ribose 5-phosphate from D-ribulose 5-phosphate (non-oxidative stage): step 1/1. Functionally, catalyzes the reversible conversion of ribose-5-phosphate to ribulose 5-phosphate. The protein is Ribose-5-phosphate isomerase A of Methanococcus maripaludis (strain C6 / ATCC BAA-1332).